The following is a 435-amino-acid chain: T-cell defective protein 2 (435 aa).

A disordered region spans residues 65–146 (NASTSFQSQP…KTPDSLRKSI (82 aa)). Positions 322–352 (TKISAKKEKEQKKSAAKEAALKEAKEKEMRI) form a coiled coil. Residues 393–419 (FFKANPPPAPRAPQAPELASGPRRIPT) form a disordered region.

As to expression, strongly expressed in the cytoplasm of the pharynx muscle cells and several head neurons, probably the IL1s or IL2s, throughout development. Also expressed in some other unidentified neurons in the tail region. Weakly expressed in the nuclei of the T-cells and the T-cell daughters. Not expressed in gonads and in P12 cell.

Its subcellular location is the nucleus. The protein resides in the cytoplasm. Its function is as follows. May act synergistically with the Wnt pathways to control T-cell fate specification, gonad development, and P12 cell fate specification. Required for the distribution of pop-1 and tlp-1 proteins. This is T-cell defective protein 2 (tcl-2) from Caenorhabditis elegans.